Reading from the N-terminus, the 188-residue chain is Trafficking protein particle complex subunit 5 (188 aa).

Serine 10 carries the post-translational modification Phosphoserine.

Belongs to the TRAPP small subunits family. BET3 subfamily. Component of the multisubunit TRAPP (transport protein particle) complex, which includes at least TRAPPC2, TRAPPC2L, TRAPPC3, TRAPPC3L, TRAPPC4, TRAPPC5, TRAPPC8, TRAPPC9, TRAPPC10, TRAPPC11 and TRAPPC12.

The protein resides in the golgi apparatus. The protein localises to the cis-Golgi network. Its subcellular location is the endoplasmic reticulum. In terms of biological role, may play a role in vesicular transport from endoplasmic reticulum to Golgi. This Homo sapiens (Human) protein is Trafficking protein particle complex subunit 5 (TRAPPC5).